The chain runs to 1058 residues: Receptor-type guanylate cyclase gcy-22 (1058 aa).

Positions 1–23 (MSFISKCFICLLFSTYFLPPVNS) are cleaved as a signal peptide. The Extracellular portion of the chain corresponds to 25–470 (VLQVGFLAAN…PKSFTDQYLA (446 aa)). N-linked (GlcNAc...) asparagine glycans are attached at residues asparagine 36, asparagine 73, asparagine 201, asparagine 215, asparagine 277, asparagine 302, asparagine 324, asparagine 350, and asparagine 386. The helical transmembrane segment at 471–491 (IILGCTAAALVLIIAVISTIV) threads the bilayer. At 492-1058 (FLVRSKRQEE…IEAKENGESI (567 aa)) the chain is on the cytoplasmic side. The Protein kinase domain maps to 501–809 (EERLNQLWQV…SSNLMDHVFN (309 aa)). The stretch at 811-840 (LEQYASNLEDEVQARMKELTEEKKRSDVLL) forms a coiled coil. The Guanylate cyclase domain maps to 867–997 (TIFFSDVVSF…DSVNTASRME (131 aa)).

Belongs to the adenylyl cyclase class-4/guanylyl cyclase family. Expression in ASER neuron begins at an early larval stage and is maintained in the adult.

The protein resides in the cell membrane. The catalysed reaction is GTP = 3',5'-cyclic GMP + diphosphate. Guanylate cyclase involved in the production of the second messenger cGMP. Regulates chemotaxis responses toward Li(1-), Mg(2+), Cl(1-), Br(1)- and I(1-) salt ions and methionine in ASE right (ASER) sensory neuron. May regulate ASER neuronal activity such as axon sprouting and calcium responses to changes in salt concentrations. This is Receptor-type guanylate cyclase gcy-22 from Caenorhabditis elegans.